The chain runs to 82 residues: Small ribosomal subunit protein bS18 (82 aa).

The protein belongs to the bacterial ribosomal protein bS18 family. Part of the 30S ribosomal subunit. Forms a tight heterodimer with protein bS6.

Binds as a heterodimer with protein bS6 to the central domain of the 16S rRNA, where it helps stabilize the platform of the 30S subunit. The sequence is that of Small ribosomal subunit protein bS18 from Methylobacterium nodulans (strain LMG 21967 / CNCM I-2342 / ORS 2060).